Consider the following 202-residue polypeptide: Probable GTP-binding protein EngB (202 aa).

One can recognise an EngB-type G domain in the interval 30–201 (NILQIALAGR…WERIQYTIDS (172 aa)). GTP is bound by residues 38-45 (GRSNVGKS), 65-69 (GKTRS), 84-87 (DLPG), 151-154 (TKID), and 180-182 (VSS). Serine 45 and threonine 67 together coordinate Mg(2+).

It belongs to the TRAFAC class TrmE-Era-EngA-EngB-Septin-like GTPase superfamily. EngB GTPase family. Mg(2+) is required as a cofactor.

In terms of biological role, necessary for normal cell division and for the maintenance of normal septation. The chain is Probable GTP-binding protein EngB from Lawsonia intracellularis (strain PHE/MN1-00).